Consider the following 299-residue polypeptide: MTDESKPTDDQPTSKGRQGARWGQERRLEFIDYRLRWDGQINRSSLTDFFGISVPQASLDITEYAKLAESNLEYDTRARVYRATESFKAVFPSSAVERYLDDLLRVAVQPEIPYGSFLGWQSPVAAVPKLGRRLNADIVGVILRAIRETGFIEVFYQSLTDPEGGERMLSPHALVHDGNRWHVRAYCHKRKAFRDFSLTRIKCCKYVGQDRDRADEDYAWNTMVNVVLTPHPGLTPAQRKLIENDFLMEGGEMHVECRRALLLYLLFQLNLNEDQADQRPEVIQLALKNRDEIKDLIQY.

Residues 1–22 (MTDESKPTDDQPTSKGRQGARW) form a disordered region. The winged HTH domain stretch occupies residues 1–95 (MTDESKPTDD…SFKAVFPSSA (95 aa)). Residues 96 to 207 (VERYLDDLLR…LTRIKCCKYV (112 aa)) form a WYL domain region. Residues 131 to 211 (GRRLNADIVG…KCCKYVGQDR (81 aa)) enclose the WYL domain. The tract at residues 156–200 (YQSLTDPEGGERMLSPHALVHDGNRWHVRAYCHKRKAFRDFSLTR) is probable ligand-binding region. A WCX domain region spans residues 208–299 (GQDRDRADED…RDEIKDLIQY (92 aa)).

In terms of assembly, homodimer.

Transcriptional regulator of a CBASS antivirus system. CBASS (cyclic oligonucleotide-based antiphage signaling system) provides immunity against bacteriophage. The CD-NTase protein synthesizes cyclic nucleotides in response to infection; these serve as specific second messenger signals. The signals activate a diverse range of effectors, leading to bacterial cell death and thus abortive phage infection. A type III CBASS system, part of a Cap17-CapW-CdnC-Cap7-Cap6-Cap18 locus. Binds specifically to palindromes that overlap the -10 site in the promoter of cdnC, found between the genes for divergently transcribed capW and cdnC (cognate DNA). Probably represses transcription bidirectionally from the promoter. The sequence is that of DNA-binding transcriptional repressor CapW from Pseudomonas aeruginosa.